The sequence spans 218 residues: Ras-related protein Rab-4A (218 aa).

GDP-binding residues include Gly23, Thr24, Gly25, Lys26, Ser27, and Cys28. 9 residues coordinate GTP: Gly23, Thr24, Gly25, Lys26, Ser27, Cys28, Ser42, His44, and Thr45. Ser27 is a binding site for Mg(2+). The Switch 1 signature appears at 44-49 (HTIGVE). Residues Thr45 and Asp68 each contribute to the Mg(2+) site. The Switch 2 signature appears at 70–79 (AGQERFRSVT). Position 71 (Gly71) interacts with GTP. At Gln72 the chain carries 5-glutamyl serotonin. Residues Asn126, Lys127, Asp129, Ala157, and Leu158 each coordinate GDP. GTP is bound by residues Asn126, Lys127, Asp129, Ala157, and Leu158. Ser190 bears the Phosphoserine mark. Position 204 is a phosphoserine; by CDK1 (Ser204). 2 S-geranylgeranyl cysteine lipidation sites follow: Cys216 and Cys218. Residue Cys218 is modified to Cysteine methyl ester.

Belongs to the small GTPase superfamily. Rab family. Interacts with SGSM1, SGSM2 and SGSM3. Interacts with RAB11FIP1, RABEP1, ZFYVE20 and RUFY1. Interacts (membrane-bound form) with NDRG1; the interaction involves NDRG1 in vesicular recycling of E-cadherin. Interacts (in GTP-bound form) with GRIPAP1 (via N-terminus). Interacts with RABEP1 and RBSN. Does not interact with HPS4. Interacts with RABEP2; this interaction may mediate VEGFR2 cell surface expression. It depends on Mg(2+) as a cofactor. Phosphorylated by CDK1 kinase during mitosis. Post-translationally, serotonylation of Gln-72 by TGM2 during activation and aggregation of platelets leads to constitutive activation of GTPase activity.

It localises to the membrane. The protein localises to the cytoplasm. Its subcellular location is the early endosome membrane. It is found in the recycling endosome membrane. It catalyses the reaction GTP + H2O = GDP + phosphate + H(+). Its activity is regulated as follows. Regulated by guanine nucleotide exchange factors (GEFs) which promote the exchange of bound GDP for free GTP. Regulated by GTPase activating proteins (GAPs) which increase the GTP hydrolysis activity. Inhibited by GDP dissociation inhibitors (GDIs). Its function is as follows. The small GTPases Rab are key regulators of intracellular membrane trafficking, from the formation of transport vesicles to their fusion with membranes. Rabs cycle between an inactive GDP-bound form and an active GTP-bound form that is able to recruit to membranes different sets of downstream effectors directly responsible for vesicle formation, movement, tethering and fusion. RAB4A is involved in protein transport. Also plays a role in vesicular traffic. Mediates VEGFR2 endosomal trafficking to enhance VEGFR2 signaling. Acts as a regulator of platelet alpha-granule release during activation and aggregation of platelets. This is Ras-related protein Rab-4A from Homo sapiens (Human).